Here is a 643-residue protein sequence, read N- to C-terminus: Threonine--tRNA ligase (643 aa).

The TGS domain maps to 1–61 (MPIITLPDGS…EQDATLEIIT (61 aa)). Residues 243–534 (DHRKIGKALD…ITEEYAGFFP (292 aa)) are catalytic. Residues Cys334, His385, and His511 each coordinate Zn(2+).

This sequence belongs to the class-II aminoacyl-tRNA synthetase family. As to quaternary structure, homodimer. Zn(2+) is required as a cofactor.

It localises to the cytoplasm. It carries out the reaction tRNA(Thr) + L-threonine + ATP = L-threonyl-tRNA(Thr) + AMP + diphosphate + H(+). In terms of biological role, catalyzes the attachment of threonine to tRNA(Thr) in a two-step reaction: L-threonine is first activated by ATP to form Thr-AMP and then transferred to the acceptor end of tRNA(Thr). Also edits incorrectly charged L-seryl-tRNA(Thr). The protein is Threonine--tRNA ligase of Haemophilus influenzae (strain 86-028NP).